Here is a 228-residue protein sequence, read N- to C-terminus: Ribosomal RNA small subunit methyltransferase G (228 aa).

Residues G70, 121-122 (AE), and R138 each bind S-adenosyl-L-methionine.

Belongs to the methyltransferase superfamily. RNA methyltransferase RsmG family.

It localises to the cytoplasm. In terms of biological role, specifically methylates the N7 position of a guanine in 16S rRNA. The polypeptide is Ribosomal RNA small subunit methyltransferase G (Thermotoga petrophila (strain ATCC BAA-488 / DSM 13995 / JCM 10881 / RKU-1)).